Consider the following 354-residue polypeptide: Fructose-bisphosphate aldolase (354 aa).

S61 provides a ligand contact to D-glyceraldehyde 3-phosphate. The active-site Proton donor is the D104. Zn(2+) contacts are provided by H105, D139, E169, and H221. G222 serves as a coordination point for dihydroxyacetone phosphate. Zn(2+) is bound at residue H260. Dihydroxyacetone phosphate contacts are provided by residues 261-263 and 282-285; these read GGS and NIDT.

The protein belongs to the class II fructose-bisphosphate aldolase family. Homodimer. Zn(2+) serves as cofactor.

The catalysed reaction is beta-D-fructose 1,6-bisphosphate = D-glyceraldehyde 3-phosphate + dihydroxyacetone phosphate. Its pathway is carbohydrate degradation; glycolysis; D-glyceraldehyde 3-phosphate and glycerone phosphate from D-glucose: step 4/4. Catalyzes the aldol condensation of dihydroxyacetone phosphate (DHAP or glycerone-phosphate) with glyceraldehyde 3-phosphate (G3P) to form fructose 1,6-bisphosphate (FBP) in gluconeogenesis and the reverse reaction in glycolysis. The polypeptide is Fructose-bisphosphate aldolase (fba) (Campylobacter jejuni subsp. jejuni serotype O:2 (strain ATCC 700819 / NCTC 11168)).